A 467-amino-acid polypeptide reads, in one-letter code: ESX-4 secretion system protein eccD4 (467 aa).

A run of 11 helical transmembrane segments spans residues 122-142 (GALA…RNAL), 152-172 (ATAG…VIAC), 186-206 (VIAT…VPGV), 209-229 (VLVA…ITGC), 241-261 (AVVV…VPAI), 264-284 (LATL…VLLA), 319-339 (LTSL…GTAV), 344-364 (IHRS…LLLL), 374-394 (SLVF…VAAD), 401-421 (PWIA…GFVA), and 439-459 (CLAL…YSAV).

It belongs to the EccD/Snm4 family. As to quaternary structure, part of the ESX-4 / type VII secretion system (T7SS), which is composed of cytosolic and membrane components.

It localises to the cell membrane. The protein is ESX-4 secretion system protein eccD4 (eccD4) of Mycobacterium tuberculosis (strain CDC 1551 / Oshkosh).